The following is a 188-amino-acid chain: Proline-rich protein 3 (188 aa).

The segment at 1-157 (MPKRKKQNQH…DPQVMEDKSD (157 aa)) is disordered. Pro residues-rich tracts occupy residues 35–46 (IGPPSLLGPPPM) and 69–82 (LIPPLLSLPPPPWG). Residues 83–96 (RGPIRRGLGPRSSP) show a composition bias toward low complexity. The segment covering 145–157 (PKDDPQVMEDKSD) has biased composition (basic and acidic residues). The segment at 155 to 183 (KSDRPVCRHFAKKGHCRYEDLCAFYHPGV) adopts a C3H1-type zinc-finger fold.

The sequence is that of Proline-rich protein 3 (PRR3) from Pan troglodytes (Chimpanzee).